The chain runs to 491 residues: Aspartyl/glutamyl-tRNA(Asn/Gln) amidotransferase subunit B (491 aa).

It belongs to the GatB/GatE family. GatB subfamily. As to quaternary structure, heterotrimer of A, B and C subunits.

It carries out the reaction L-glutamyl-tRNA(Gln) + L-glutamine + ATP + H2O = L-glutaminyl-tRNA(Gln) + L-glutamate + ADP + phosphate + H(+). It catalyses the reaction L-aspartyl-tRNA(Asn) + L-glutamine + ATP + H2O = L-asparaginyl-tRNA(Asn) + L-glutamate + ADP + phosphate + 2 H(+). Allows the formation of correctly charged Asn-tRNA(Asn) or Gln-tRNA(Gln) through the transamidation of misacylated Asp-tRNA(Asn) or Glu-tRNA(Gln) in organisms which lack either or both of asparaginyl-tRNA or glutaminyl-tRNA synthetases. The reaction takes place in the presence of glutamine and ATP through an activated phospho-Asp-tRNA(Asn) or phospho-Glu-tRNA(Gln). This chain is Aspartyl/glutamyl-tRNA(Asn/Gln) amidotransferase subunit B, found in Paraburkholderia phytofirmans (strain DSM 17436 / LMG 22146 / PsJN) (Burkholderia phytofirmans).